Here is a 239-residue protein sequence, read N- to C-terminus: DNA repair protein RecO (239 aa).

This sequence belongs to the RecO family.

Functionally, involved in DNA repair and RecF pathway recombination. This chain is DNA repair protein RecO, found in Bifidobacterium longum (strain DJO10A).